The primary structure comprises 562 residues: Methionine--tRNA ligase, mitochondrial (562 aa).

Residues 1–10 (MLRSLALRTF) constitute a mitochondrion transit peptide. Residues 43-53 (FYVNAAPHLGH) carry the 'HIGH' region motif. Residues 332–336 (KMSKS) carry the 'KMSKS' region motif. Residue lysine 335 participates in ATP binding.

This sequence belongs to the class-I aminoacyl-tRNA synthetase family.

It localises to the mitochondrion matrix. The catalysed reaction is tRNA(Met) + L-methionine + ATP = L-methionyl-tRNA(Met) + AMP + diphosphate. This is Methionine--tRNA ligase, mitochondrial (mars2) from Xenopus laevis (African clawed frog).